The sequence spans 346 residues: UDP-N-acetylenolpyruvoylglucosamine reductase (346 aa).

The FAD-binding PCMH-type domain maps to 22 to 194 (GFDVRARFAC…TSVTFRLPKV (173 aa)). The active site involves Arg170. Ser246 serves as the catalytic Proton donor. Residue Glu342 is part of the active site.

It belongs to the MurB family. Requires FAD as cofactor.

It is found in the cytoplasm. It carries out the reaction UDP-N-acetyl-alpha-D-muramate + NADP(+) = UDP-N-acetyl-3-O-(1-carboxyvinyl)-alpha-D-glucosamine + NADPH + H(+). The protein operates within cell wall biogenesis; peptidoglycan biosynthesis. In terms of biological role, cell wall formation. The polypeptide is UDP-N-acetylenolpyruvoylglucosamine reductase (Paraburkholderia xenovorans (strain LB400)).